Reading from the N-terminus, the 145-residue chain is D-aminoacyl-tRNA deacylase (145 aa).

A Gly-cisPro motif, important for rejection of L-amino acids motif is present at residues 137–138; it reads GP.

This sequence belongs to the DTD family. Homodimer.

It is found in the cytoplasm. It carries out the reaction glycyl-tRNA(Ala) + H2O = tRNA(Ala) + glycine + H(+). The enzyme catalyses a D-aminoacyl-tRNA + H2O = a tRNA + a D-alpha-amino acid + H(+). Functionally, an aminoacyl-tRNA editing enzyme that deacylates mischarged D-aminoacyl-tRNAs. Also deacylates mischarged glycyl-tRNA(Ala), protecting cells against glycine mischarging by AlaRS. Acts via tRNA-based rather than protein-based catalysis; rejects L-amino acids rather than detecting D-amino acids in the active site. By recycling D-aminoacyl-tRNA to D-amino acids and free tRNA molecules, this enzyme counteracts the toxicity associated with the formation of D-aminoacyl-tRNA entities in vivo and helps enforce protein L-homochirality. This is D-aminoacyl-tRNA deacylase from Shewanella piezotolerans (strain WP3 / JCM 13877).